We begin with the raw amino-acid sequence, 199 residues long: Small ribosomal subunit protein uS14m (199 aa).

The disordered stretch occupies residues 28-67; the sequence is LSTPAPEPAKPSSEETTESTEPATSVEDAGEPMKEKRITQ.

Belongs to the universal ribosomal protein uS14 family. As to quaternary structure, component of the mitochondrial ribosome small subunit (28S) which comprises a 12S rRNA and about 30 distinct proteins. Interacts with LIAT1.

It localises to the mitochondrion. The chain is Small ribosomal subunit protein uS14m (mrps-14) from Caenorhabditis elegans.